Here is a 318-residue protein sequence, read N- to C-terminus: L-lactate dehydrogenase (318 aa).

NAD(+)-binding positions include valine 18, aspartate 39, lysine 44, tyrosine 69, and 83–84 (GA). Residues glutamine 86 and arginine 92 each coordinate substrate. Residues serine 105, 122-124 (VSN), and serine 147 contribute to the NAD(+) site. 124–127 (NPVD) is a substrate binding site. 152–155 (DTSR) is a binding site for substrate. The Proton acceptor role is filled by histidine 179. A Phosphotyrosine modification is found at tyrosine 225. Residue threonine 234 coordinates substrate.

Belongs to the LDH/MDH superfamily. LDH family. In terms of assembly, homotetramer.

The protein localises to the cytoplasm. It catalyses the reaction (S)-lactate + NAD(+) = pyruvate + NADH + H(+). The protein operates within fermentation; pyruvate fermentation to lactate; (S)-lactate from pyruvate: step 1/1. Its function is as follows. Catalyzes the conversion of lactate to pyruvate. The protein is L-lactate dehydrogenase of Clostridium botulinum (strain Loch Maree / Type A3).